The following is a 242-amino-acid chain: Probable L-ribulose-5-phosphate 4-epimerase UlaF (242 aa).

Substrate is bound by residues 31–32 (GN), 48–49 (SG), and 78–79 (SS). Residues Asp-80, His-99, and His-101 each coordinate Zn(2+). The Proton donor/acceptor role is filled by Asp-124. Position 175 (His-175) interacts with Zn(2+). The active-site Proton donor/acceptor is the Tyr-234.

This sequence belongs to the aldolase class II family. AraD/FucA subfamily. Requires Zn(2+) as cofactor.

It carries out the reaction L-ribulose 5-phosphate = D-xylulose 5-phosphate. Its pathway is cofactor degradation; L-ascorbate degradation; D-xylulose 5-phosphate from L-ascorbate: step 4/4. Its function is as follows. Catalyzes the isomerization of L-ribulose 5-phosphate to D-xylulose 5-phosphate. Is involved in the anaerobic L-ascorbate utilization. The chain is Probable L-ribulose-5-phosphate 4-epimerase UlaF from Mycoplasma pneumoniae (strain ATCC 29342 / M129 / Subtype 1) (Mycoplasmoides pneumoniae).